We begin with the raw amino-acid sequence, 472 residues long: Protein c-ets-2-B (472 aa).

Positions 85–170 constitute a PNT domain; the sequence is DTFNGFAKER…EHLEEMMKEY (86 aa). Residues 366-446 constitute a DNA-binding region (ETS); the sequence is IQLWQFLLEL…SGKRYVYRFV (81 aa).

This sequence belongs to the ETS family.

The protein localises to the nucleus. Probable transcription factor. In Xenopus laevis (African clawed frog), this protein is Protein c-ets-2-B (ets2-b).